We begin with the raw amino-acid sequence, 253 residues long: UPF0246 protein lhv_1883 (253 aa).

The protein belongs to the UPF0246 family.

This Lactobacillus helveticus (strain DPC 4571) protein is UPF0246 protein lhv_1883.